We begin with the raw amino-acid sequence, 708 residues long: Ubiquitin thioesterase ZRANB1 (708 aa).

The segment at 3–33 (ERGIKWACEYCTYENWPSAIKCTMCRAQRPS) adopts a RanBP2-type 1 zinc-finger fold. 4 residues coordinate Zn(2+): Cys10, Cys13, Cys24, and Cys27. The disordered stretch occupies residues 38–73 (TEDPFKSGSSDVGRDWDPSSTEGGSSPLICPDSSAR). RanBP2-type zinc fingers lie at residues 84–113 (NANKWSCHMCTYLNWPRAIRCTQCLSQRRT) and 149–178 (RTQHWTCSICTYENWAKAKKCVVCDHPRPN). 8 residues coordinate Zn(2+): Cys90, Cys93, Cys104, Cys107, Cys155, Cys158, Cys169, and Cys172. Residues 200–223 (RARWRGSCSSGNSQRRSPPTMKRD) form a disordered region. The span at 206-216 (SCSSGNSQRRS) shows a compositional bias: polar residues. ANK repeat units lie at residues 260 to 290 (KKTDWLFLNACVGVVEGDLAAIEAYKSSGGD) and 313 to 340 (YTLVHLAIRFQRQDMLAILLTEVSQQAA). An OTU domain is found at 432 to 592 (LYALWNRTAG…RGHFSALVAM (161 aa)). Cys443 serves as the catalytic Nucleophile. His585 (proton acceptor) is an active-site residue.

Belongs to the peptidase C64 family. In terms of assembly, interacts with TRAF6. Interacts with APC.

The protein resides in the cytoplasm. It is found in the nucleus. The catalysed reaction is Thiol-dependent hydrolysis of ester, thioester, amide, peptide and isopeptide bonds formed by the C-terminal Gly of ubiquitin (a 76-residue protein attached to proteins as an intracellular targeting signal).. In terms of biological role, ubiquitin thioesterase, which specifically hydrolyzes 'Lys-29'-linked and 'Lys-33'-linked diubiquitin. Also cleaves 'Lys-63'-linked chains, but with 40-fold less efficiency compared to 'Lys-29'-linked ones. Positive regulator of the Wnt signaling pathway that deubiquitinates APC protein, a negative regulator of Wnt-mediated transcription. Acts as a regulator of autophagy by mediating deubiquitination of PIK3C3/VPS34, thereby promoting autophagosome maturation. Plays a role in the regulation of cell morphology and cytoskeletal organization. Required in the stress fiber dynamics and cell migration. The protein is Ubiquitin thioesterase ZRANB1 of Bos taurus (Bovine).